We begin with the raw amino-acid sequence, 231 residues long: Beta-casein (231 aa).

The first 15 residues, 1–15 (MKVFILACLVALALA), serve as a signal peptide directing secretion. S24 bears the Phosphoserine mark. T27 carries the phosphothreonine modification. Residues S29, S31, and S32 each carry the phosphoserine modification.

It belongs to the beta-casein family. As to expression, mammary gland specific. Secreted in milk.

It is found in the secreted. Important role in determination of the surface properties of the casein micelles. The sequence is that of Beta-casein (Csn2) from Rattus norvegicus (Rat).